The primary structure comprises 452 residues: Chromosomal replication initiator protein DnaA (452 aa).

Residues 1-73 are domain I, interacts with DnaA modulators; that stretch reads MSPNSTLWQT…NELATKYSST (73 aa). A domain II region spans residues 73 to 102; it reads TPVRLKFVSQEEVIEEPVADRKLTIDYRQG. The interval 103–323 is domain III, AAA+ region; sequence NLNSTYTFDS…GALIRLISYA (221 aa). ATP contacts are provided by glycine 147, glycine 149, lysine 150, and threonine 151. A domain IV, binds dsDNA region spans residues 324-452; that stretch reads QTFNLEITMN…VKKIDSPLLK (129 aa).

Belongs to the DnaA family. Oligomerizes as a right-handed, spiral filament on DNA at oriC.

It localises to the cytoplasm. Plays an essential role in the initiation and regulation of chromosomal replication. ATP-DnaA binds to the origin of replication (oriC) to initiate formation of the DNA replication initiation complex once per cell cycle. Binds the DnaA box (a 9 base pair repeat at the origin) and separates the double-stranded (ds)DNA. Forms a right-handed helical filament on oriC DNA; dsDNA binds to the exterior of the filament while single-stranded (ss)DNA is stabiized in the filament's interior. The ATP-DnaA-oriC complex binds and stabilizes one strand of the AT-rich DNA unwinding element (DUE), permitting loading of DNA polymerase. After initiation quickly degrades to an ADP-DnaA complex that is not apt for DNA replication. Binds acidic phospholipids. This is Chromosomal replication initiator protein DnaA from Acholeplasma laidlawii (strain PG-8A).